A 389-amino-acid chain; its full sequence is uncharacterized protein (389 aa).

The signal sequence occupies residues 1–23; sequence MHFAKLGAIGLLGSIICAYAASA.

This sequence belongs to the IUNH family.

The protein resides in the endoplasmic reticulum lumen. This is an uncharacterized protein from Schizosaccharomyces pombe (strain 972 / ATCC 24843) (Fission yeast).